Here is a 545-residue protein sequence, read N- to C-terminus: Leucine-rich repeat LGI family member 2 (545 aa).

The signal sequence occupies residues 1–28; the sequence is MALRRGGCGALGLLLLLLGAACLIPRSA. The 37-residue stretch at 29-65 folds into the LRRNT domain; it reads QVRRLARCPATCSCTKESIICVGSSWVPRIVPGDISS. N-linked (GlcNAc...) asparagine glycosylation is present at N70. LRR repeat units lie at residues 86 to 107, 110 to 131, and 134 to 155; these read SLQLLLLNSNSFTIIRDDAFAG, HLEYLFIEGNKIETISRNAFRG, and DLTHLSLANNHIKALPRDVFSD. Residues 167–217 enclose the LRRCT domain; sequence NKFECDCKAKWLYLWLKMTNSTVSDVLCIGPPEYQEKKLNDVTSFDYECTT. The N-linked (GlcNAc...) asparagine glycan is linked to N186. EAR repeat units follow at residues 219-261, 265-307, 311-358, 360-403, 407-450, 452-494, and 498-540; these read DFVV…EWDH, NFRS…KYDE, KFVK…KWNS, GFYS…QWNK, KFVP…RWNS, QFVE…QWDK, and LFKK…EHII. N271 is a glycosylation site (N-linked (GlcNAc...) asparagine). N402 is a glycosylation site (N-linked (GlcNAc...) asparagine).

As to expression, brain, heart and placenta.

The protein localises to the secreted. Required for the development of soma-targeting inhibitory GABAergic synapses made by parvalbumin-positive basket cells. In Homo sapiens (Human), this protein is Leucine-rich repeat LGI family member 2 (LGI2).